Reading from the N-terminus, the 261-residue chain is 6-phosphogluconolactonase (261 aa).

The protein belongs to the glucosamine/galactosamine-6-phosphate isomerase family. 6-phosphogluconolactonase subfamily.

It carries out the reaction 6-phospho-D-glucono-1,5-lactone + H2O = 6-phospho-D-gluconate + H(+). It functions in the pathway carbohydrate degradation; pentose phosphate pathway; D-ribulose 5-phosphate from D-glucose 6-phosphate (oxidative stage): step 2/3. In terms of biological role, hydrolysis of 6-phosphogluconolactone to 6-phosphogluconate. The polypeptide is 6-phosphogluconolactonase (pgl) (Streptomyces coelicolor (strain ATCC BAA-471 / A3(2) / M145)).